A 54-amino-acid polypeptide reads, in one-letter code: Ovomucoid (54 aa).

Residues 4-54 (VDCSEYPKPVCSLEYMPLCGSDSQTYSNECNFCNAVVDSNGTLTLSHFGKC) enclose the Kazal-like domain. Disulfide bonds link Cys-6-Cys-36, Cys-14-Cys-33, and Cys-22-Cys-54. Asn-43 carries an N-linked (GlcNAc...) asparagine glycan.

The protein resides in the secreted. The sequence is that of Ovomucoid from Caracara plancus (Southern caracara).